A 164-amino-acid chain; its full sequence is Telomerase-associated protein of 19 kDa (164 aa).

In terms of assembly, component of the telomerase holoenzyme complex, composed of the catalytic core (the catalytic subunit TERT, the telomerase RNA template component TER and TAP65/p65), which is associated with two heterotrimeric subcomplexes: (i) the replication protein A (RPA)-related subcomplex, composed of TEB1, RPA2/TEB2 and RPA3/TEB3 and (ii) the CST-like subcomplex, composed of TAP75/p75, TAP45/p45 and TAP19/p19. TEB1 and the CST-like subcomplex are tethered to the catalytic core by TAP50/p50.

It localises to the chromosome. The protein localises to the telomere. Its function is as follows. Component of a CST-like subcomplex of the holoenzyme telomerase ribonucleoprotein complex, which stimulates telomerase complementary-strand synthesis. Telomerase is an essential ribonucleoprotein enzyme that copies new telomeric repeats onto chromosome ends by repetitively synthesizing the short telomere-repeat sequence 5'-TTGGGG-3' using an RNA template component TER. The CST-like subcomplex (also named 7-4-1) binds telomeric single-stranded DNA and coordinates telomere G-strand and C-strand synthesis. The chain is Telomerase-associated protein of 19 kDa from Tetrahymena thermophila (strain SB210).